Consider the following 440-residue polypeptide: GTPase Der (440 aa).

2 EngA-type G domains span residues 4–169 (PVVA…PEED) and 178–353 (IKVA…DQAA). GTP-binding positions include 10–17 (GRPNVGKS), 57–61 (DTGGI), 120–123 (NKVD), 184–191 (GKPNVGKS), 231–235 (DTAGI), and 296–299 (NKWD). The KH-like domain occupies 354–438 (MRISTGVLND…PIKFILREKE (85 aa)).

This sequence belongs to the TRAFAC class TrmE-Era-EngA-EngB-Septin-like GTPase superfamily. EngA (Der) GTPase family. Associates with the 50S ribosomal subunit.

GTPase that plays an essential role in the late steps of ribosome biogenesis. The polypeptide is GTPase Der (Acetivibrio thermocellus (strain ATCC 27405 / DSM 1237 / JCM 9322 / NBRC 103400 / NCIMB 10682 / NRRL B-4536 / VPI 7372) (Clostridium thermocellum)).